The sequence spans 308 residues: tRNA pseudouridine synthase B (308 aa).

Aspartate 49 serves as the catalytic Nucleophile.

Belongs to the pseudouridine synthase TruB family. Type 1 subfamily.

It catalyses the reaction uridine(55) in tRNA = pseudouridine(55) in tRNA. Functionally, responsible for synthesis of pseudouridine from uracil-55 in the psi GC loop of transfer RNAs. This chain is tRNA pseudouridine synthase B, found in Nitrosococcus oceani (strain ATCC 19707 / BCRC 17464 / JCM 30415 / NCIMB 11848 / C-107).